The following is a 176-amino-acid chain: Ribosome maturation factor RimM (176 aa).

The PRC barrel domain maps to proline 96–phenylalanine 176.

Belongs to the RimM family. As to quaternary structure, binds ribosomal protein uS19.

The protein localises to the cytoplasm. Functionally, an accessory protein needed during the final step in the assembly of 30S ribosomal subunit, possibly for assembly of the head region. Essential for efficient processing of 16S rRNA. May be needed both before and after RbfA during the maturation of 16S rRNA. It has affinity for free ribosomal 30S subunits but not for 70S ribosomes. The chain is Ribosome maturation factor RimM from Shewanella baltica (strain OS223).